We begin with the raw amino-acid sequence, 121 residues long: Large ribosomal subunit protein bL19 (121 aa).

It belongs to the bacterial ribosomal protein bL19 family.

Functionally, this protein is located at the 30S-50S ribosomal subunit interface and may play a role in the structure and function of the aminoacyl-tRNA binding site. The protein is Large ribosomal subunit protein bL19 of Amoebophilus asiaticus (strain 5a2).